A 225-amino-acid polypeptide reads, in one-letter code: Cardiotrophin-like cytokine factor 1 (225 aa).

Residues 1 to 27 (MDLRAGDSWGMLACLCTVLWHLPAVPA) form the signal peptide. A glycan (N-linked (GlcNAc...) asparagine) is linked at Asn-29.

The protein belongs to the IL-6 superfamily. In terms of assembly, forms a heteromeric complex with cardiotrophin-like cytokine CRLF1/CLF-1; the CRLF1-CLCF1 complex is a ligand for the ciliary neurotrophic factor receptor/CNTFR. The CRLF1-CLCF1 heterodimer binds SORL1 (via N-terminal ectodomain); within this complex, the interaction is mediated predominantly by the CRLF1 moiety. The tripartite signaling complex formed by CRLF1, CLCF1 and CNTFR also binds SORL1. As to expression, expressed predominantly in lymph nodes, spleen, peripheral blood lymphocytes, bone marrow, and fetal liver.

The protein resides in the secreted. Functionally, in complex with CRLF1, forms a heterodimeric neurotropic cytokine that plays a crucial role during neuronal development. Also stimulates B-cells. Binds to and activates the ILST/gp130 receptor. This Homo sapiens (Human) protein is Cardiotrophin-like cytokine factor 1 (CLCF1).